The sequence spans 484 residues: Ubiquinone biosynthesis monooxygenase COQ6, mitochondrial (484 aa).

The N-terminal 41 residues, 1-41, are a transit peptide targeting the mitochondrion; it reads MLSLAKAKLAVVGIGRQCVAVRTLNGARAVHRSFSSSEHDQ.

This sequence belongs to the UbiH/COQ6 family. As to quaternary structure, component of a multi-subunit COQ enzyme complex, composed of at least coq3, coq4, coq5, coq6, coq7 and coq9. Interacts with coq8b and coq7. It depends on FAD as a cofactor.

The protein resides in the mitochondrion inner membrane. The protein localises to the golgi apparatus. It is found in the cell projection. The catalysed reaction is a 4-hydroxy-3-(all-trans-polyprenyl)benzoate + 2 reduced [2Fe-2S]-[ferredoxin] + O2 + 2 H(+) = a 3,4-dihydroxy-5-(all-trans-polyprenyl)benzoate + 2 oxidized [2Fe-2S]-[ferredoxin] + H2O. It catalyses the reaction a 2-methoxy-6-(all-trans-polyprenyl)phenol + 2 reduced [2Fe-2S]-[ferredoxin] + O2 + 2 H(+) = a 2-methoxy-6-(all-trans-polyprenyl)benzene-1,4-diol + 2 oxidized [2Fe-2S]-[ferredoxin] + H2O. It functions in the pathway cofactor biosynthesis; ubiquinone biosynthesis. In terms of biological role, FAD-dependent monooxygenase required for two non-consecutive steps during ubiquinone biosynthesis. Required for the C5-ring hydroxylation during ubiquinone biosynthesis by catalyzing the hydroxylation of 4-hydroxy-3-(all-trans-polyprenyl)benzoic acid to 3,4-dihydroxy-5-(all-trans-polyprenyl)benzoic acid. Also acts downstream of coq4, for the C1-hydroxylation during ubiquinone biosynthesis by catalyzing the hydroxylation of 2-methoxy-6-(all-trans-polyprenyl)phenol to 2-methoxy-6-(all-trans-polyprenyl)benzene-1,4-diol. The electrons required for the hydroxylation reaction are funneled indirectly to coq6 from NADPH via a ferredoxin/ferredoxin reductase system. This is Ubiquinone biosynthesis monooxygenase COQ6, mitochondrial from Danio rerio (Zebrafish).